Consider the following 331-residue polypeptide: Phosphoribosylformylglycinamidine cyclo-ligase (331 aa).

It belongs to the AIR synthase family.

The protein resides in the cytoplasm. The catalysed reaction is 2-formamido-N(1)-(5-O-phospho-beta-D-ribosyl)acetamidine + ATP = 5-amino-1-(5-phospho-beta-D-ribosyl)imidazole + ADP + phosphate + H(+). The protein operates within purine metabolism; IMP biosynthesis via de novo pathway; 5-amino-1-(5-phospho-D-ribosyl)imidazole from N(2)-formyl-N(1)-(5-phospho-D-ribosyl)glycinamide: step 2/2. This Clostridium kluyveri (strain NBRC 12016) protein is Phosphoribosylformylglycinamidine cyclo-ligase.